Here is a 987-residue protein sequence, read N- to C-terminus: Transposase for transposon Tn4430 (987 aa).

The protein belongs to the transposase 7 family.

In terms of biological role, required for transposition of transposon Tn4430. The protein is Transposase for transposon Tn4430 (tnpA) of Bacillus thuringiensis.